Consider the following 725-residue polypeptide: Malate synthase G 2 (725 aa).

Acetyl-CoA-binding positions include valine 118, 125–126, serine 276, and arginine 313; that span reads RY. The active-site Proton acceptor is arginine 340. Residues arginine 340, glutamate 429, and 454-457 each bind glyoxylate; that span reads GFLD. Glutamate 429 and aspartate 457 together coordinate Mg(2+). Proline 538 serves as a coordination point for acetyl-CoA. The residue at position 619 (cysteine 619) is a Cysteine sulfenic acid (-SOH). Aspartate 633 (proton donor) is an active-site residue.

Belongs to the malate synthase family. GlcB subfamily. In terms of assembly, monomer. Mg(2+) is required as a cofactor.

It is found in the cytoplasm. It catalyses the reaction glyoxylate + acetyl-CoA + H2O = (S)-malate + CoA + H(+). The protein operates within carbohydrate metabolism; glyoxylate cycle; (S)-malate from isocitrate: step 2/2. Its function is as follows. Involved in the glycolate utilization. Catalyzes the condensation and subsequent hydrolysis of acetyl-coenzyme A (acetyl-CoA) and glyoxylate to form malate and CoA. The chain is Malate synthase G 2 from Pseudomonas syringae pv. tomato (strain ATCC BAA-871 / DC3000).